The following is a 241-amino-acid chain: NAD(P)H-hydrate epimerase (241 aa).

Residues 11 to 221 form the YjeF N-terminal domain; it reads AASLDKDLME…SIVEKYGLNC (211 aa). 65-69 provides a ligand contact to (6S)-NADPHX; it reads NNGGD. Positions 66 and 127 each coordinate K(+). Residues 131–137 and aspartate 160 each bind (6S)-NADPHX; that span reads GFSFGGP. Serine 163 contacts K(+).

Belongs to the NnrE/AIBP family. The cofactor is K(+).

The protein localises to the cytoplasm. Its subcellular location is the mitochondrion. It carries out the reaction (6R)-NADHX = (6S)-NADHX. It catalyses the reaction (6R)-NADPHX = (6S)-NADPHX. Functionally, catalyzes the epimerization of the S- and R-forms of NAD(P)HX, a damaged form of NAD(P)H that is a result of enzymatic or heat-dependent hydration. This is a prerequisite for the S-specific NAD(P)H-hydrate dehydratase to allow the repair of both epimers of NAD(P)HX. This chain is NAD(P)H-hydrate epimerase, found in Aspergillus fumigatus (strain ATCC MYA-4609 / CBS 101355 / FGSC A1100 / Af293) (Neosartorya fumigata).